A 372-amino-acid polypeptide reads, in one-letter code: Glutamate 5-kinase (372 aa).

An ATP-binding site is contributed by Lys14. Substrate is bound by residues Ser54, Asp141, and Asn153. 173–174 (TD) lines the ATP pocket. Residues 280 to 358 (RGTVVIDDGA…SQIESLLGYS (79 aa)) form the PUA domain.

Belongs to the glutamate 5-kinase family.

It is found in the cytoplasm. It carries out the reaction L-glutamate + ATP = L-glutamyl 5-phosphate + ADP. Its pathway is amino-acid biosynthesis; L-proline biosynthesis; L-glutamate 5-semialdehyde from L-glutamate: step 1/2. Catalyzes the transfer of a phosphate group to glutamate to form L-glutamate 5-phosphate. This is Glutamate 5-kinase from Methylibium petroleiphilum (strain ATCC BAA-1232 / LMG 22953 / PM1).